Reading from the N-terminus, the 238-residue chain is MLTTLLPILLLSGWAFCSQDASDGLQRLHMLQISYFRDPYHVWYQGNASLGGHLTHVLEGPDTNTTIIQLQPLQEPESWARTQSGLQSYLLQFHGLVRLVHQERTLAFPLTIRCFLGCELPPEGSRAHVFFEVAVNGSSFVSFRPERALWQADTQVTSGVVTFTLQQLNAYNRTRYELREFLEDTCVQYVQKHISAENTKGSQTSRSYTSLVLGVLVGSFIIAGVAVGIFLCTGGRRC.

The signal sequence occupies residues 1-17 (MLTTLLPILLLSGWAFC). Over 18-210 (SQDASDGLQR…GSQTSRSYTS (193 aa)) the chain is Extracellular. N47, N64, N136, and N172 each carry an N-linked (GlcNAc...) asparagine glycan. C118 and C186 are disulfide-bonded. The chain crosses the membrane as a helical span at residues 211-231 (LVLGVLVGSFIIAGVAVGIFL). The Cytoplasmic segment spans residues 232-238 (CTGGRRC).

Post-translationally, N-glycosylated. In terms of processing, a soluble form exists; probably released by a metalloprotease. Seems to have the same activity as the membrane-bound form. Expressed strongly in the endothelial cells of arteries and veins in heart and lung, less intensely in capillaries in the lung and skin, and not at all in the endothelium of small vessels of the liver and kidney.

It localises to the membrane. Binds activated protein C. Enhances protein C activation by the thrombin-thrombomodulin complex; plays a role in the protein C pathway controlling blood coagulation. The polypeptide is Endothelial protein C receptor (PROCR) (Homo sapiens (Human)).